A 468-amino-acid polypeptide reads, in one-letter code: 6-phosphogluconate dehydrogenase, decarboxylating (468 aa).

NADP(+) contacts are provided by residues 9–14, 32–34, 73–75, and Asn-101; these read GLAVMG, NRS, and VQA. Substrate is bound by residues Asn-101 and 127–129; that span reads SGG. Lys-182 functions as the Proton acceptor in the catalytic mechanism. Position 185 to 186 (185 to 186) interacts with substrate; sequence HN. Glu-189 (proton donor) is an active-site residue. 5 residues coordinate substrate: Tyr-190, Lys-259, Arg-286, Arg-444, and His-450.

It belongs to the 6-phosphogluconate dehydrogenase family. In terms of assembly, homodimer.

The catalysed reaction is 6-phospho-D-gluconate + NADP(+) = D-ribulose 5-phosphate + CO2 + NADPH. It participates in carbohydrate degradation; pentose phosphate pathway; D-ribulose 5-phosphate from D-glucose 6-phosphate (oxidative stage): step 3/3. Catalyzes the oxidative decarboxylation of 6-phosphogluconate to ribulose 5-phosphate and CO(2), with concomitant reduction of NADP to NADPH. In Staphylococcus aureus (strain Mu50 / ATCC 700699), this protein is 6-phosphogluconate dehydrogenase, decarboxylating (gnd).